A 359-amino-acid chain; its full sequence is 4-dedimethylamino-4-oxo-anhydrotetracycline transaminase OxyQ (359 aa).

Positions 32, 92, and 155 each coordinate substrate. Residues 91–92 (TK), Asn155, Tyr186, and 216–218 (SLS) contribute to the pyridoxal 5'-phosphate site. Position 219 is an N6-(pyridoxal phosphate)lysine (Lys219). Residue Arg227 coordinates pyridoxal 5'-phosphate. A substrate-binding site is contributed by Arg341.

The protein belongs to the class-I pyridoxal-phosphate-dependent aminotransferase family. Requires pyridoxal 5'-phosphate as cofactor.

The protein operates within antibiotic biosynthesis; oxytetracycline biosynthesis. Involved in the biosynthesis of the tetracycline antibiotic, oxytetracycline. Catalyzes the conversion of 4-dedimethylamino-4-oxoanhydrotetracycline to yield 4-amino-4-de(dimethylamino)anhydrotetracycline (4-amino-ATC). In Streptomyces rimosus, this protein is 4-dedimethylamino-4-oxo-anhydrotetracycline transaminase OxyQ.